We begin with the raw amino-acid sequence, 335 residues long: Galactosylgalactosylxylosylprotein 3-beta-glucuronosyltransferase 3 (335 aa).

The Cytoplasmic portion of the chain corresponds to 1–7; it reads MKLKLKN. The chain crosses the membrane as a helical; Signal-anchor for type II membrane protein span at residues 8-28; it reads VFLAYFLVSIAGLLYALVQLG. Residues 29-335 lie on the Lumenal side of the membrane; that stretch reads QPCDCLPPLR…GQGSDPAIEV (307 aa). Position 196 (Asp-196) interacts with Mn(2+). Glu-281 (proton acceptor) is an active-site residue. Asn-300 carries N-linked (GlcNAc...) asparagine glycosylation. Positions 312–322 are enriched in basic and acidic residues; the sequence is EKPKMKQEEQL. The interval 312-335 is disordered; it reads EKPKMKQEEQLQRQGQGSDPAIEV.

This sequence belongs to the glycosyltransferase 43 family. As to quaternary structure, homodimer; disulfide-linked. Interacts with PXYLP1; the interaction increases the 2-phosphoxylose phosphatase activity of PXYLP1 during completion of linkage region formation in a B3GAT3-mediated manner. Mn(2+) is required as a cofactor. Post-translationally, N-glycosylated. Liver, brain and heart. Moderate expression seen in lung, skeletal muscle, kidney and testis.

The protein localises to the golgi apparatus membrane. The protein resides in the golgi apparatus. Its subcellular location is the cis-Golgi network. It catalyses the reaction 3-O-(beta-D-galactosyl-(1-&gt;3)-beta-D-galactosyl-(1-&gt;4)-beta-D-xylosyl)-L-seryl-[protein] + UDP-alpha-D-glucuronate = 3-O-(beta-D-GlcA-(1-&gt;3)-beta-D-Gal-(1-&gt;3)-beta-D-Gal-(1-&gt;4)-beta-D-Xyl)-L-seryl-[protein] + UDP + H(+). Its pathway is protein modification; protein glycosylation. Functionally, glycosaminoglycans biosynthesis. Involved in forming the linkage tetrasaccharide present in heparan sulfate and chondroitin sulfate. Transfers a glucuronic acid moiety from the uridine diphosphate-glucuronic acid (UDP-GlcUA) to the common linkage region trisaccharide Gal-beta-1,3-Gal-beta-1,4-Xyl covalently bound to a Ser residue at the glycosaminylglycan attachment site of proteoglycans. Can also play a role in the biosynthesis of l2/HNK-1 carbohydrate epitope on glycoproteins. Highest activity seen with Gal-beta-1,3-Gal-beta-O-R (where R=naphthalenemethanol or benzyl alcohol). Stimulates 2-phosphoxylose phosphatase activity of PXYLP1 in presence of uridine diphosphate-glucuronic acid (UDP-GlcUA) during completion of linkage region formation. In Cricetulus griseus (Chinese hamster), this protein is Galactosylgalactosylxylosylprotein 3-beta-glucuronosyltransferase 3 (B3GAT3).